A 325-amino-acid chain; its full sequence is MAARLEFEKPVIELQTKIAELKKFTQDSEMDLSAEIARLEERLSKLQDEIYKNLKPWDRVQIARLPDRPTTLDYIQYLFTDFFECHGDRTYGDDAAIVGGVAKYHGMPVTVIGHQRGKDTKENLVRNFGMPHPEGYRKALRLMKQADKFNRPIICFIDTKGAYPGKAAEERGQSEAIAKNLFEMAGLTVPVVCIVIGEGGSGGALALGVGNRMLMLENSTYSVISPEGAASILWKDSSLAKKAAESMKITAPDLLELGIIDDMIKEVKGGAHHDIKQQAGYIDGILKETLKSLLQLNAEELISQRYEKYKAIGKVSVEDQYIGVN.

A CoA carboxyltransferase C-terminal domain is found at 38 to 292 (RLEERLSKLQ…DGILKETLKS (255 aa)).

This sequence belongs to the AccA family. In terms of assembly, acetyl-CoA carboxylase is a heterohexamer composed of biotin carboxyl carrier protein (AccB), biotin carboxylase (AccC) and two subunits each of ACCase subunit alpha (AccA) and ACCase subunit beta (AccD).

The protein resides in the cytoplasm. The catalysed reaction is N(6)-carboxybiotinyl-L-lysyl-[protein] + acetyl-CoA = N(6)-biotinyl-L-lysyl-[protein] + malonyl-CoA. It participates in lipid metabolism; malonyl-CoA biosynthesis; malonyl-CoA from acetyl-CoA: step 1/1. Its function is as follows. Component of the acetyl coenzyme A carboxylase (ACC) complex. First, biotin carboxylase catalyzes the carboxylation of biotin on its carrier protein (BCCP) and then the CO(2) group is transferred by the carboxyltransferase to acetyl-CoA to form malonyl-CoA. The chain is Acetyl-coenzyme A carboxylase carboxyl transferase subunit alpha from Bacillus velezensis (strain DSM 23117 / BGSC 10A6 / LMG 26770 / FZB42) (Bacillus amyloliquefaciens subsp. plantarum).